Reading from the N-terminus, the 125-residue chain is Ribonuclease P protein component (125 aa).

This sequence belongs to the RnpA family. Consists of a catalytic RNA component (M1 or rnpB) and a protein subunit.

It catalyses the reaction Endonucleolytic cleavage of RNA, removing 5'-extranucleotides from tRNA precursor.. Functionally, RNaseP catalyzes the removal of the 5'-leader sequence from pre-tRNA to produce the mature 5'-terminus. It can also cleave other RNA substrates such as 4.5S RNA. The protein component plays an auxiliary but essential role in vivo by binding to the 5'-leader sequence and broadening the substrate specificity of the ribozyme. This is Ribonuclease P protein component from Clostridium beijerinckii (strain ATCC 51743 / NCIMB 8052) (Clostridium acetobutylicum).